We begin with the raw amino-acid sequence, 297 residues long: Inosose dehydratase (297 aa).

The protein belongs to the IolE/MocC family. Glutathione serves as cofactor. It depends on Co(2+) as a cofactor. Requires Mn(2+) as cofactor.

The catalysed reaction is scyllo-inosose = 3D-3,5/4-trihydroxycyclohexane-1,2-dione + H2O. The protein operates within polyol metabolism; myo-inositol degradation into acetyl-CoA; acetyl-CoA from myo-inositol: step 2/7. Functionally, catalyzes the dehydration of inosose (2-keto-myo-inositol, 2KMI or 2,4,6/3,5-pentahydroxycyclohexanone) to 3D-(3,5/4)-trihydroxycyclohexane-1,2-dione (D-2,3-diketo-4-deoxy-epi-inositol). This is Inosose dehydratase from Clostridium perfringens (strain 13 / Type A).